The following is a 307-amino-acid chain: tRNA dimethylallyltransferase (307 aa).

7–14 provides a ligand contact to ATP; that stretch reads GPTAGGKT. 9–14 serves as a coordination point for substrate; sequence TAGGKT. The segment at 32–35 is interaction with substrate tRNA; the sequence is DSRQ.

The protein belongs to the IPP transferase family. In terms of assembly, monomer. Mg(2+) serves as cofactor.

The catalysed reaction is adenosine(37) in tRNA + dimethylallyl diphosphate = N(6)-dimethylallyladenosine(37) in tRNA + diphosphate. Functionally, catalyzes the transfer of a dimethylallyl group onto the adenine at position 37 in tRNAs that read codons beginning with uridine, leading to the formation of N6-(dimethylallyl)adenosine (i(6)A). The sequence is that of tRNA dimethylallyltransferase from Elusimicrobium minutum (strain Pei191).